The sequence spans 1024 residues: Hemolysin, plasmid (1024 aa).

A compositionally biased stretch (polar residues) spans 20–32; sequence AANKLHSAGQSTK. A disordered region spans residues 20–39; the sequence is AANKLHSAGQSTKDALKKAA. 3 helical membrane-spanning segments follow: residues 238–260, 268–327, and 365–411; these read IGAG…ILSN, KAAA…LSIA, and DASL…GILE. Residues Lys564 and Lys690 are each lipidated (N6-myristoyl lysine). 6 Hemolysin-type calcium-binding repeats span residues 732 to 749, 750 to 767, 768 to 785, 786 to 803, 816 to 833, and 834 to 851; these read FGSK…DDLI, EGND…NDTL, SGGN…NDKL, IGVA…DDEF, FGGK…ADLL, and DGGE…NDIY.

This sequence belongs to the RTX prokaryotic toxin (TC 1.C.11) family. Post-translationally, myristoylated by HlyC; the toxin only becomes active when modified. Mainly myristoylated, while a minor fraction is acylated with pentadecanoyl (C15:0; 26%) and heptadecanoyl (C17:0; 6%) fatty acyl groups. Fatty acylation is involved in binding to host membranes and promotes the irreversible insertion of Hemolysin into the host cell membrane. Can be activated by both myristoylation and palmitoylation, but HlyC catalyzes lysine myristoylation.

It is found in the secreted. The protein resides in the host cell membrane. Its function is as follows. Bacterial hemolysins are exotoxins that attack blood cell membranes and cause cell rupture by forming a pore. In Escherichia coli, this protein is Hemolysin, plasmid.